Reading from the N-terminus, the 149-residue chain is UPF0260 protein Pmen_1776 (149 aa).

This sequence belongs to the UPF0260 family.

In Ectopseudomonas mendocina (strain ymp) (Pseudomonas mendocina), this protein is UPF0260 protein Pmen_1776.